Consider the following 938-residue polypeptide: Chaperone protein ClpD1, chloroplastic (938 aa).

The transit peptide at 1-83 directs the protein to the chloroplast; the sequence is MEVCCCSTSS…FERFTERAVK (83 aa). 2 repeat regions span residues 84 to 145 and 159 to 224; these read AVVL…TPGA and FSGS…LQAE. The Clp R domain maps to 84–224; sequence AVVLSQREAK…SVALTRLQAE (141 aa). The segment at 234–255 is disordered; it reads GASSFKVPKKSPAGAGRSAFSK. The tract at residues 266–519 is i; the sequence is LDQFCLDLTT…RMESFNRKKE (254 aa). Residues 311–318 and 660–667 each bind ATP; these read GEAGVGKT and GPTGVGKT. Residues 586-777 form an II region; the sequence is VGTEEIARVA…LIVMTSNIGS (192 aa).

It belongs to the ClpA/ClpB family. ClpD subfamily. Expressed in stems, culms and leaves.

The protein resides in the plastid. Its subcellular location is the chloroplast. In terms of biological role, molecular chaperone that may function in heat stress response. May interact with a ClpP-like protease involved in degradation of denatured proteins in the chloroplast. Chaperone involved in response to abiotic stresses. Plays a positive role during dehydration and salt stress. The chain is Chaperone protein ClpD1, chloroplastic from Oryza sativa subsp. japonica (Rice).